The primary structure comprises 505 residues: Calcium/calmodulin-dependent protein kinase kinase 1 (505 aa).

The disordered stretch occupies residues 27-66 (HLEEAEEGPEPASNGVDPPPRARAASVIPGSASRPTPVRP). A phosphoserine mark is found at serine 67 and serine 74. Position 78 is an asymmetric dimethylarginine (arginine 78). Serine 100 is modified (phosphoserine). The residue at position 108 (threonine 108) is a Phosphothreonine. In terms of domain architecture, Protein kinase spans 128 to 409 (YKLQSEIGKG…VSDIKLHPWV (282 aa)). ATP contacts are provided by residues 134–142 (IGKGAYGVV) and lysine 157. The interval 167-189 (QYGFPRRPPPRGSQAPQGGPAKQ) is RP domain. Aspartate 275 serves as the catalytic Proton acceptor. An autoinhibitory domain region spans residues 435–440 (KNSVKL). Positions 438–463 (VKLIPSWTTVILVKSMLRKRSFGNPF) are calmodulin-binding. 3 positions are modified to phosphoserine: serine 458, serine 475, and serine 492. Residues 460–505 (GNPFEPQARREERSMSAPGNLLLKEGCGEGGKSPELPGVQEDEAAS) are disordered.

The protein belongs to the protein kinase superfamily. Ser/Thr protein kinase family. In terms of assembly, interacts with CAMK4 and calmodulin. Post-translationally, appears to be autophosphorylated. Phosphorylated at multiple sites by PRCAKA/PKA. Phosphorylation of Ser-458 is blocked upon binding to Ca(2+)/calmodulin. May be phosphorylated by CAMK1 and CAMK4. Mostly expressed in the brain with higher levels in cortex and hippocampus. Lower expression levels were detected in striatum, nucleus accumbens and cerebellum (at protein level). Abundant in forebrain, weaker in cerebellum and also detected in thymus and spleen.

Its subcellular location is the cytoplasm. It is found in the nucleus. It catalyses the reaction L-seryl-[protein] + ATP = O-phospho-L-seryl-[protein] + ADP + H(+). It carries out the reaction L-threonyl-[protein] + ATP = O-phospho-L-threonyl-[protein] + ADP + H(+). Activated by Ca(2+)/calmodulin. Binding of calmodulin may relieve intrasteric autoinhibition. Partially inhibited upon phosphorylation by PRCAKA/PKA. May be regulated through phosphorylation by CAMK1 and CAMK4. Calcium/calmodulin-dependent protein kinase that belongs to a proposed calcium-triggered signaling cascade involved in a number of cellular processes. Phosphorylates CAMK1, CAMK1D, CAMK1G and CAMK4. Involved in regulating cell apoptosis. Promotes cell survival by phosphorylating AKT1/PKB that inhibits pro-apoptotic BAD/Bcl2-antagonist of cell death. The sequence is that of Calcium/calmodulin-dependent protein kinase kinase 1 (Camkk1) from Rattus norvegicus (Rat).